A 199-amino-acid chain; its full sequence is Pre-histone-like nucleoprotein (199 aa).

S2 is subject to N-acetylserine; by host. The propeptide occupies 2-23; that stretch reads SILISPSDNTGWGLGTGKMYGG. An N6-acetyllysine; by host modification is found at K26. The Nuclear localization signal signature appears at 189–199; the sequence is RRKASVRRRRT.

This sequence belongs to the adenoviridae histone-like nucleoprotein family. As to quaternary structure, interacts with the core-capsid bridging protein; this interaction bridges the virus core to the capsid. Interacts with host NPM1; this interaction might play a role in placing the pre-histone-like nucleoprotein on the viral DNA or regulating viral gene expression. Interacts with host HMGB1; this interaction inhibits host immune response. In terms of processing, cleaved near the N-terminus by the viral protease during virion maturation to form the mature protein.

It localises to the virion. It is found in the host nucleus. The protein localises to the host nucleolus. Plays a role in the inhibition of host immune response within the nucleus. Interacts with cellular nucleosomes and immobilizes the host immune danger signal HMGB1 on chromatin. In turn, prevents HMGB1 release out of the cell and thus decreases inflammation. Also plays a role in the wrapping and condensation of the viral DNA. May also promote viral genome import into the nucleus. The protein is Pre-histone-like nucleoprotein of Murine adenovirus A serotype 1 (MAdV-1).